Consider the following 427-residue polypeptide: Citrate synthase (427 aa).

Residues His306 and Asp363 contribute to the active site.

This sequence belongs to the citrate synthase family. In terms of assembly, homohexamer.

The catalysed reaction is oxaloacetate + acetyl-CoA + H2O = citrate + CoA + H(+). It participates in carbohydrate metabolism; tricarboxylic acid cycle; isocitrate from oxaloacetate: step 1/2. Allosterically inhibited by NADH. The protein is Citrate synthase (gltA) of Salmonella typhimurium (strain LT2 / SGSC1412 / ATCC 700720).